The following is a 526-amino-acid chain: Butyrophilin subfamily 1 member A1 (526 aa).

An N-terminal signal peptide occupies residues 1–26 (MAVFPNSCLAGCLLIFILLQLPKLDS). Ig-like V-type domains lie at 27–140 (APFD…VHLK) and 148–234 (PHIS…VEVS). Over 27–242 (APFDVIGPQE…VSIPASFFPR (216 aa)) the chain is Extracellular. Cystine bridges form between Cys-50-Cys-124 and Cys-164-Cys-218. The N-linked (GlcNAc...) (complex) asparagine glycan is linked to Asn-55. Asn-215 is a glycosylation site (N-linked (GlcNAc...) (hybrid) asparagine). The helical transmembrane segment at 243-269 (LTPWMVAVAVILVVLGLLTIGSIFFTW) threads the bilayer. Residues 270–526 (RLYKERSRQR…IPLQPSQGVP (257 aa)) lie on the Cytoplasmic side of the membrane. Residues 285–479 (SKEKLLEELK…LTICPVTDGL (195 aa)) form the B30.2/SPRY domain.

It belongs to the immunoglobulin superfamily. BTN/MOG family. As to quaternary structure, seems to associate with xanthine dehydrogenase/oxidase. Expressed in mammary tissue.

It localises to the membrane. Its function is as follows. May function in the secretion of milk-fat droplets. May act as a specific membrane-associated receptor for the association of cytoplasmic droplets with the apical plasma membrane. Inhibits the proliferation of CD4 and CD8 T-cells activated by anti-CD3 antibodies, T-cell metabolism and IL2 and IFNG secretion. The protein is Butyrophilin subfamily 1 member A1 (BTN1A1) of Bos taurus (Bovine).